The primary structure comprises 769 residues: Calcium up-regulated protein B (769 aa).

A disordered region spans residues 1 to 22 (MINIEDISKSSNQSEEKQLKST). 2 Ricin B-type lectin domains span residues 25–145 (KPKY…WTTF) and 158–296 (FQSK…WITN).

The protein belongs to the cup family.

It localises to the cytoplasm. The protein resides in the membrane. Functionally, may play an important role in stabilizing and/or regulating the cell membrane during Ca(2+) stress or certain stages of development. This chain is Calcium up-regulated protein B (cupB), found in Dictyostelium discoideum (Social amoeba).